A 351-amino-acid polypeptide reads, in one-letter code: Ion-translocating oxidoreductase complex subunit D (351 aa).

Helical transmembrane passes span 20–40, 44–64, 89–109, and 123–143; these read IMLLVILACLPGMLAQVYFFG, LIQVGLASATALIAEGVTLSL, LPPLAPWWMVVMATVFAIIIA, and PAMIGYVVLLISFPVQMTSWL. The residue at position 187 (T187) is an FMN phosphoryl threonine. 5 consecutive transmembrane segments (helical) span residues 215–235, 244–264, 267–287, 301–321, and 322–342; these read LSGIGWQWVNIGFLIGGLFLL, IPVSFLLSLMFCASLSWVIAP, FAPPMLHLLSGATMLGAFFIA, LIFGALIGLLVWLIRTYGGYP, and DGVAFAVLLANITVPLIDYYT.

The protein belongs to the NqrB/RnfD family. In terms of assembly, the complex is composed of six subunits: RnfA, RnfB, RnfC, RnfD, RnfE and RnfG. Requires FMN as cofactor.

The protein resides in the cell inner membrane. Its function is as follows. Part of a membrane-bound complex that couples electron transfer with translocation of ions across the membrane. The polypeptide is Ion-translocating oxidoreductase complex subunit D (Pectobacterium carotovorum subsp. carotovorum (strain PC1)).